A 657-amino-acid polypeptide reads, in one-letter code: Probable alpha-galactosidase D (657 aa).

Residues 1 to 16 (MLPKIFYLSLLPAALG) form the signal peptide. N-linked (GlcNAc...) asparagine glycans are attached at residues Asn-47 and Asn-91. A disulfide bridge connects residues Cys-124 and Cys-157. The active-site Nucleophile is Asp-155. N-linked (GlcNAc...) asparagine glycans are attached at residues Asn-182 and Asn-191. Residue 200 to 204 (EWGID) participates in substrate binding. The Proton donor role is filled by Asp-222. N-linked (GlcNAc...) asparagine glycosylation is found at Asn-291, Asn-438, Asn-460, Asn-505, Asn-539, Asn-543, and Asn-582.

It belongs to the glycosyl hydrolase 27 family.

It is found in the secreted. It catalyses the reaction Hydrolysis of terminal, non-reducing alpha-D-galactose residues in alpha-D-galactosides, including galactose oligosaccharides, galactomannans and galactolipids.. In terms of biological role, hydrolyzes a variety of simple alpha-D-galactoside as well as more complex molecules such as oligosaccharides and polysaccharides. This is Probable alpha-galactosidase D (aglD) from Aspergillus oryzae (strain ATCC 42149 / RIB 40) (Yellow koji mold).